The primary structure comprises 87 residues: Small ribosomal subunit protein bS20 (87 aa).

The disordered stretch occupies residues 1-28 (MANIKSQQKRNRTNERARLRNKSVKSSL).

It belongs to the bacterial ribosomal protein bS20 family.

Its function is as follows. Binds directly to 16S ribosomal RNA. The chain is Small ribosomal subunit protein bS20 from Mycobacterium marinum (strain ATCC BAA-535 / M).